Consider the following 1250-residue polypeptide: DNA-directed RNA polymerase subunit beta (1250 aa).

The tract at residues 1215–1250 (QDLNDDDINPDDTIDAELDDNLFDDDFDDTFDDDDL) is disordered.

It belongs to the RNA polymerase beta chain family. As to quaternary structure, the RNAP catalytic core consists of 2 alpha, 1 beta, 1 beta' and 1 omega subunit. When a sigma factor is associated with the core the holoenzyme is formed, which can initiate transcription.

The catalysed reaction is RNA(n) + a ribonucleoside 5'-triphosphate = RNA(n+1) + diphosphate. Functionally, DNA-dependent RNA polymerase catalyzes the transcription of DNA into RNA using the four ribonucleoside triphosphates as substrates. This chain is DNA-directed RNA polymerase subunit beta, found in Acetivibrio thermocellus (strain ATCC 27405 / DSM 1237 / JCM 9322 / NBRC 103400 / NCIMB 10682 / NRRL B-4536 / VPI 7372) (Clostridium thermocellum).